The sequence spans 280 residues: MKVIKTLSIINFFIFVTFNIKNGSKYSNTFINNAYNMSIRRSMANEGSNTKSVGANAPKADTIASGSQSSTNSASTSTTNNGESQTTTPTAADTPTATESNSRSPPITTTESNSRSPPITTTESNSRSPPITTTESNSRSPPITTTESNSRSPPITTTESSSSGNAPNKTDGKGEESEKQNELNESTEEGPKAPQEPQTAENENPAAPENKGTGQHGHMHGSRNNHPQNTSDSQKECTDGNKENCGAATSLLNNSSNIASINKFVVLISATLVLSFAIFI.

An N-terminal signal peptide occupies residues 1–20; that stretch reads MKVIKTLSIINFFIFVTFNI. N-linked (GlcNAc...) asparagine glycosylation is found at Asn22 and Asn36. The segment at 44–206 is polymorphic region; sequence ANEGSNTKSV…PQTAENENPA (163 aa). The tract at residues 47–242 is disordered; the sequence is GSNTKSVGAN…SQKECTDGNK (196 aa). The 5 X 12 AA tandem repeats of P-P-I-T-T-T-E-S-N-S-R-S stretch occupies residues 51–74; that stretch reads KSVGANAPKADTIASGSQSSTNSA. A compositionally biased stretch (low complexity) spans 64–98; the sequence is ASGSQSSTNSASTSTTNNGESQTTTPTAADTPTAT. Over residues 99-149 the composition is skewed to polar residues; that stretch reads ESNSRSPPITTTESNSRSPPITTTESNSRSPPITTTESNSRSPPITTTESN. 4 consecutive repeat copies span residues 105-116, 117-128, 129-140, and 141-152. The segment covering 150–163 has biased composition (low complexity); it reads SRSPPITTTESSSS. Residues 153–160 form a 5; partial repeat; the sequence is PPITTTES. Asn168 carries an N-linked (GlcNAc...) asparagine glycan. The segment covering 170–182 has biased composition (basic and acidic residues); sequence TDGKGEESEKQNE. Asn184 and Asn229 each carry an N-linked (GlcNAc...) asparagine glycan. The span at 233-242 shows a compositional bias: basic and acidic residues; sequence SQKECTDGNK. Residues Cys237 and Cys245 are joined by a disulfide bond. 2 N-linked (GlcNAc...) asparagine glycosylation sites follow: Asn253 and Asn254. The GPI-anchor amidated asparagine moiety is linked to residue Asn254. Residues 255–280 constitute a propeptide, removed in mature form; that stretch reads SSNIASINKFVVLISATLVLSFAIFI.

The protein localises to the cell membrane. In terms of biological role, may play a role in the merozoite attachment to the erythrocyte. The chain is Merozoite surface protein 2 from Plasmodium falciparum (isolate K1 / Thailand).